The following is a 109-amino-acid chain: Nucleoid-associated protein ASA_2087 (109 aa).

2 disordered regions span residues 1 to 23 (MFGK…RMQK) and 87 to 109 (QSKS…KLPF). The segment covering 11–23 (MKQAQQMQERMQK) has biased composition (low complexity).

This sequence belongs to the YbaB/EbfC family. As to quaternary structure, homodimer.

Its subcellular location is the cytoplasm. It is found in the nucleoid. In terms of biological role, binds to DNA and alters its conformation. May be involved in regulation of gene expression, nucleoid organization and DNA protection. This is Nucleoid-associated protein ASA_2087 from Aeromonas salmonicida (strain A449).